Reading from the N-terminus, the 201-residue chain is UPF0301 protein Arad_1256 (201 aa).

Belongs to the UPF0301 (AlgH) family.

The sequence is that of UPF0301 protein Arad_1256 from Rhizobium rhizogenes (strain K84 / ATCC BAA-868) (Agrobacterium radiobacter).